A 232-amino-acid chain; its full sequence is Flagellar L-ring protein (232 aa).

Positions 1–21 are cleaved as a signal peptide; it reads MQKYALHAYPVMALMVATLTG. Cys-22 is lipidated: N-palmitoyl cysteine. A lipid anchor (S-diacylglycerol cysteine) is attached at Cys-22.

The protein belongs to the FlgH family. As to quaternary structure, the basal body constitutes a major portion of the flagellar organelle and consists of four rings (L,P,S, and M) mounted on a central rod.

Its subcellular location is the cell outer membrane. It localises to the bacterial flagellum basal body. Its function is as follows. Assembles around the rod to form the L-ring and probably protects the motor/basal body from shearing forces during rotation. In Salmonella choleraesuis (strain SC-B67), this protein is Flagellar L-ring protein.